The chain runs to 411 residues: Aspartokinase (411 aa).

7–10 (KFGG) is an ATP binding site. 25–30 (RVIEEK) contacts substrate. S41 lines the ATP pocket. Substrate is bound by residues 47–49 (TDE), E74, 125–126 (LN), 150–153 (RGGS), and S153. ATP is bound by residues 173 to 174 (TD) and 179 to 184 (FTTDPR). ACT domains lie at 264 to 338 (VTVF…SETG) and 344 to 411 (IVGS…KSER). Residues 289 to 291 (NVD), Q295, 355 to 356 (VA), 369 to 370 (QV), and 376 to 377 (SE) contribute to the substrate site.

It belongs to the aspartokinase family. In terms of assembly, tetramer consisting of 2 isoforms Alpha (catalytic and regulation) and of a homodimer of 2 isoforms Beta (regulation).

The enzyme catalyses L-aspartate + ATP = 4-phospho-L-aspartate + ADP. Its pathway is amino-acid biosynthesis; L-lysine biosynthesis via DAP pathway; (S)-tetrahydrodipicolinate from L-aspartate: step 1/4. It functions in the pathway amino-acid biosynthesis; L-methionine biosynthesis via de novo pathway; L-homoserine from L-aspartate: step 1/3. It participates in amino-acid biosynthesis; L-threonine biosynthesis; L-threonine from L-aspartate: step 1/5. Lysine-sensitive. In terms of biological role, catalyzes the phosphorylation of the beta-carboxyl group of aspartic acid with ATP to yield 4-phospho-L-aspartate, which is involved in the branched biosynthetic pathway leading to the biosynthesis of amino acids threonine, isoleucine and methionine. This Bacillus sp. (strain MGA3) protein is Aspartokinase (lysC).